We begin with the raw amino-acid sequence, 341 residues long: Anthranilate phosphoribosyltransferase (341 aa).

5-phospho-alpha-D-ribose 1-diphosphate is bound by residues Gly80, 83–84 (GD), Thr88, 90–93 (NIST), 108–116 (KHGNYSVSS), and Ser120. An anthranilate-binding site is contributed by Gly80. Ser92 contributes to the Mg(2+) binding site. Asn111 provides a ligand contact to anthranilate. Arg166 provides a ligand contact to anthranilate. 2 residues coordinate Mg(2+): Asp224 and Glu225.

It belongs to the anthranilate phosphoribosyltransferase family. In terms of assembly, homodimer. It depends on Mg(2+) as a cofactor.

It carries out the reaction N-(5-phospho-beta-D-ribosyl)anthranilate + diphosphate = 5-phospho-alpha-D-ribose 1-diphosphate + anthranilate. It functions in the pathway amino-acid biosynthesis; L-tryptophan biosynthesis; L-tryptophan from chorismate: step 2/5. Functionally, catalyzes the transfer of the phosphoribosyl group of 5-phosphorylribose-1-pyrophosphate (PRPP) to anthranilate to yield N-(5'-phosphoribosyl)-anthranilate (PRA). This chain is Anthranilate phosphoribosyltransferase, found in Haloquadratum walsbyi (strain DSM 16790 / HBSQ001).